The following is a 172-amino-acid chain: Transcriptional repressor NrdR (172 aa).

The segment at 3-34 is a zinc-finger region; sequence CPFCRHPDSRVVDSRTTDDGTSIRRRRQCPDC. The 91-residue stretch at 46 to 136 folds into the ATP-cone domain; it reads LMVIKRSGVT…VYRAFDSLED (91 aa). Positions 152 to 172 are disordered; it reads ERSGGGTCGTGTVPVPAGTAD. Positions 161–172 are enriched in low complexity; the sequence is TGTVPVPAGTAD.

The protein belongs to the NrdR family. The cofactor is Zn(2+).

Its function is as follows. Negatively regulates transcription of bacterial ribonucleotide reductase nrd genes and operons by binding to NrdR-boxes. This is Transcriptional repressor NrdR from Streptomyces clavuligerus.